The following is a 216-amino-acid chain: Noggin-1 (216 aa).

An N-terminal signal peptide occupies residues 1-18; it reads MDFPRFLLSAYLLLLSFA. The N-linked (GlcNAc...) asparagine glycan is linked to N55.

The protein belongs to the noggin family. As to quaternary structure, homodimer; disulfide-linked.

It localises to the secreted. Its function is as follows. Inhibitor of bone morphogenetic proteins (BMP) signaling. May play an important role in the dorsoventral patterning of the embryo. This Danio rerio (Zebrafish) protein is Noggin-1 (nog1).